A 579-amino-acid chain; its full sequence is DBIRD complex subunit ZNF326 (579 aa).

Residues 1–124 form a mediates transcriptional activation region; sequence MDFEDDYTHS…YRNSLDSFGG (124 aa). Residues Ser48, Ser56, Ser63, Ser69, Ser81, Ser82, Ser91, Ser106, Ser114, Ser118, Ser121, and Ser137 each carry the phosphoserine modification. A Glycyl lysine isopeptide (Lys-Gly) (interchain with G-Cter in SUMO2) cross-link involves residue Lys140. The disordered stretch occupies residues 154 to 194; that stretch reads YSSYSSFSSPHMKPAPVGSRGRGTPAYPESTFGSRNYDAFG. Arg173 carries the omega-N-methylarginine modification. Residue Ser212 is modified to Phosphoserine. Position 235 is an omega-N-methylarginine (Arg235). The short motif at 238-260 is the Bipartite nuclear localization signal element; that stretch reads KRKMIQPFNKPGGTFIKKPKLAK. Lys240 participates in a covalent cross-link: Glycyl lysine isopeptide (Lys-Gly) (interchain with G-Cter in SUMO2). Lys247 bears the N6-acetyllysine; alternate mark. Residue Lys247 forms a Glycyl lysine isopeptide (Lys-Gly) (interchain with G-Cter in SUMO2); alternate linkage. Positions 248-302 are disordered; it reads PGGTFIKKPKLAKPVEKMSLSKSPTKTDPKNEEEEKRRIEARREKQRRRREKNSE. Thr251 is modified (phosphothreonine). Residues Lys254 and Lys264 each participate in a glycyl lysine isopeptide (Lys-Gly) (interchain with G-Cter in SUMO2) cross-link. The residue at position 270 (Ser270) is a Phosphoserine. Residues 272 to 290 show a composition bias toward basic and acidic residues; sequence TKTDPKNEEEEKRRIEARR. A C2H2 AKAP95-type 1 zinc finger spans residues 314–336; the sequence is CSFCKFRTFEEKDIELHLESASH. Lys401 participates in a covalent cross-link: Glycyl lysine isopeptide (Lys-Gly) (interchain with G-Cter in SUMO2). The C2H2 AKAP95-type 2 zinc-finger motif lies at 407 to 430; sequence CSACSVYIPALHSSVQQHLKSPDH. Glycyl lysine isopeptide (Lys-Gly) (interchain with G-Cter in SUMO2) cross-links involve residues Lys459 and Lys467. Residues 470-579 are disordered; that stretch reads NPFEIQDHSQ…GFSVDQAEEN (110 aa). Acidic residues-rich tracts occupy residues 483 to 520, 529 to 541, and 549 to 565; these read IEGD…EEVG, GDTE…EGEG, and GEGE…EEAK.

The protein belongs to the AKAP95 family. Component of the DBIRD complex. Interacts with CCAR2; the interaction is direct.

It localises to the nucleus matrix. Its function is as follows. Core component of the DBIRD complex, a multiprotein complex that acts at the interface between core mRNP particles and RNA polymerase II (RNAPII) and integrates transcript elongation with the regulation of alternative splicing: the DBIRD complex affects local transcript elongation rates and alternative splicing of a large set of exons embedded in (A + T)-rich DNA regions. May play a role in neuronal differentiation and is able to bind DNA and activate expression in vitro. The chain is DBIRD complex subunit ZNF326 (ZNF326) from Bos taurus (Bovine).